A 1428-amino-acid chain; its full sequence is DNA topoisomerase 2 (1428 aa).

ATP is bound by residues Asn-70, Asn-99, 127-129 (SSN), and 140-147 (GRNGYGAK). Residues 333–336 (KKKK) are interaction with DNA. ATP is bound at residue 365–367 (QTK). Residues 443–557 (CTLVLTEGDS…GLLDIQGFLL (115 aa)) form the Toprim domain. 3 residues coordinate Mg(2+): Glu-449, Asp-526, and Asp-528. The region spanning 692–1159 (IPNVLDGFKP…SAKDIWNTDL (468 aa)) is the Topo IIA-type catalytic domain. The active-site O-(5'-phospho-DNA)-tyrosine intermediate is the Tyr-782. The interval 965–974 (KLISPISLMN) is interaction with DNA. Disordered stretches follow at residues 1083–1102 (KGATSDEEDEESSHEDTENV), 1176–1217 (ARGG…RKGK), 1240–1288 (KAPT…ELSK), and 1303–1428 (MGST…NEED). At Thr-1086 the chain carries Phosphothreonine; by CK2. Ser-1087 is subject to Phosphoserine; by CK2. Over residues 1207–1217 (KNKKSTARKGK) the composition is skewed to basic residues. A Phosphoserine modification is found at Ser-1252. At Thr-1258 the chain carries Phosphothreonine; by CK2. Ser-1266, Ser-1269, and Ser-1272 each carry phosphoserine; by CK2. A compositionally biased stretch (basic and acidic residues) spans 1275-1286 (DIKKEDKDEGEL). Basic residues predominate over residues 1332-1347 (TAVKPKLAKKPVRKQQ). Phosphoserine; by CK2 occurs at positions 1353, 1356, 1408, and 1423. Acidic residues predominate over residues 1403-1428 (ELSDDSFIEDDEEENQGSDVSFNEED).

The protein belongs to the type II topoisomerase family. In terms of assembly, homodimer. Requires Mg(2+) as cofactor. It depends on Mn(2+) as a cofactor. Ca(2+) is required as a cofactor. In terms of processing, phosphorylation enhances the activity. Stimulates decatenation activity.

The protein localises to the nucleus. The enzyme catalyses ATP-dependent breakage, passage and rejoining of double-stranded DNA.. In terms of biological role, control of topological states of DNA by transient breakage and subsequent rejoining of DNA strands. Topoisomerase II makes double-strand breaks. Essential during mitosis and meiosis for proper segregation of daughter chromosomes. This Saccharomyces cerevisiae (strain ATCC 204508 / S288c) (Baker's yeast) protein is DNA topoisomerase 2 (TOP2).